The sequence spans 411 residues: MFSRAVRLSRAALPIRVASQRVPIAARRSVTTNAAQAQVDKSTIPESEDEPFTIRLSDESFETYELDPPPYTLEVTKKQLKQMYYDMVVVRQMEMAADRLYKEKKIRGFCHLSVGQEAVAVGVEHAIEKTDDVITSYRCHGFAYMRGGTVRSIIGELLGRREGIAYGKGGSMHMFTKGFYGGNGIVGAQVPVGAGLAFAQKYTGGKKATVILYGDGASNQGQVFEAFNMAKLWNLPALFGCENNKYGMGTSAARSSALTDYYKRGQYIPGLKVNGMDVLAVKAAVQYGKQWTVEGNGPLVLEYVTYRYGGHSMSDPGTTYRTREEIQRMRSTNDPIAGLKQRIINWGVATEEEVKGIDKAARAHVNEEVAAAEAMAPPEPTAKILFEDIYVKGTEPRYIRGRTLDEVYYFN.

Residues 1 to 29 (MFSRAVRLSRAALPIRVASQRVPIAARRS) constitute a mitochondrion transit peptide. The pyruvate site is built by His111, Tyr137, Arg138, Gly184, Val186, Asp215, Gly216, Ala217, Asn244, and Tyr246. 8 residues coordinate thiamine diphosphate: Tyr137, Arg138, Gly184, Val186, Asp215, Gly216, Ala217, and Asn244. Position 215 (Asp215) interacts with Mg(2+). 2 residues coordinate Mg(2+): Asn244 and Tyr246. Residue His311 coordinates thiamine diphosphate.

In terms of assembly, eukaryotic pyruvate dehydrogenase (PDH) complexes are organized as a core consisting of the oligomeric dihydrolipoamide acetyl-transferase (E2), around which are arranged multiple copies of pyruvate dehydrogenase (E1), dihydrolipoamide dehydrogenase (E3) and protein X (E3BP) bound by non-covalent bonds. The Chaetomium thermophilum PDH complex contains 60 E2 units, 12 E3BP units, about 20 E1 units, and 12 or more E3 units. The units are organized in 1 E2 60-mer, 4 E3BP trimers, about 20 E1 tetramers, and a maximum of 12 E3 dimers. Pyruvate dehydrogenase (E1) is active as a tetramer of 2 alpha and 2 beta subunits. The E3BP trimers are bound inside the icosahedral core with tetrahedral symmetry. It depends on thiamine diphosphate as a cofactor. Mg(2+) is required as a cofactor.

The protein resides in the mitochondrion. The catalysed reaction is N(6)-[(R)-lipoyl]-L-lysyl-[protein] + pyruvate + H(+) = N(6)-[(R)-S(8)-acetyldihydrolipoyl]-L-lysyl-[protein] + CO2. Functionally, the 10-megadalton pyruvate dehydrogenase complex contains multiple copies of three enzymatic components: pyruvate dehydrogenase (E1), dihydrolipoamide acetyltransferase (E2) and lipoamide dehydrogenase (E3) and catalyzes the overall oxidative decarboxylation of pyruvate to form acetyl-CoA and CO(2). Within the complex, pyruvate and thiamine pyrophosphate (TPP or vitamin B1) are bound by pyruvate dehydrogenase E1 subunits alpha and beta and pyruvate is decarboxylated leading to the 2-carbon hydrohyethyl bound to TPP. The E2 component contains covalently-bound lipoyl cofactors and transfers the hydroxyethyl group from TPP to an oxidized form of covalently bound lipoamide, and the resulting acetyl group is then transferred to free coenzyme A to form acetyl-CoA and reduced dihydrolipoamide-E2. Finally, the flavoprotein dihydrolipoamide dehydrogenase (E3) re-oxidizes the lipoyl group of dihydrolipoamide-E2 to form lipoamide-E2 and NADH. A fourth subunit, E3BP, is responsible for tethering E3 in proximity to the core, forming the entire metabolon. In Chaetomium thermophilum (strain DSM 1495 / CBS 144.50 / IMI 039719) (Thermochaetoides thermophila), this protein is Pyruvate dehydrogenase E1 component subunit alpha, mitochondrial.